The sequence spans 96 residues: Protein RnfH (96 aa).

This sequence belongs to the UPF0125 (RnfH) family.

The polypeptide is Protein RnfH (Pectobacterium carotovorum subsp. carotovorum (strain PC1)).